We begin with the raw amino-acid sequence, 131 residues long: Profilin-2 (131 aa).

The protein belongs to the profilin family. Occurs in many kinds of cells as a complex with monomeric actin in a 1:1 ratio. In terms of tissue distribution, expressed in vascular bundles of roots, hypocotyls, cotyledons, leaves, sepals, petals, stamen filaments and stalks of developing seeds. Expressed in leaf epidermal cells, trichomes and stem epidermal cells. Detected in phloem exudates (at protein level).

The protein localises to the cytoplasm. It is found in the cytoskeleton. The protein resides in the endoplasmic reticulum. It localises to the cytosol. Its subcellular location is the nucleus. Its function is as follows. Binds to actin monomers and regulates the organization of the actin cytoskeleton. At high concentrations, profilin prevents the polymerization of actin, whereas it enhances it at low concentrations. At low concentrations, associates with the poly-proline motif of formins to enhance actin filament elongation rate. Binds G-actin and poly-L-proline with low affinity in vitro. Binds ACT1, ACT7 and ACT11 and inhibits actin polymerization. May be involved in the cross-talk between vesicular trafficking and the actin cytoskeleton. Inhibits cell growth of various pathogenic fungal strains. May play a role as antifungal proteins in the defense system against fungal pathogen attacks. This chain is Profilin-2, found in Arabidopsis thaliana (Mouse-ear cress).